A 205-amino-acid chain; its full sequence is uncharacterized protein (205 aa).

A signal peptide spans 1–19 (MKTLCVLSIFLALLGGLCT). Low complexity predominate over residues 40-133 (VSSVASTSTP…PKTSKNNPKT (94 aa)). Residues 40–135 (VSSVASTSTP…TSKNNPKTQE (96 aa)) form a disordered region. A helical transmembrane segment spans residues 147-167 (GILYLFILLLIIFVIILICFI).

Its subcellular location is the host membrane. This is an uncharacterized protein from Equine herpesvirus 2 (strain 86/87) (EHV-2).